The chain runs to 508 residues: Hydroxymethylglutaryl-CoA synthase, mitochondrial (508 aa).

The transit peptide at 1–37 directs the protein to the mitochondrion; that stretch reads MQRLLTPVRQVLQVKRVMQEASLLPARLLPAAHPSFS. Lys-52 is subject to N6-succinyllysine. (3S)-3-hydroxy-3-methylglutaryl-CoA-binding residues include Glu-80 and Ala-81. Residue Glu-132 is the Proton donor/acceptor of the active site. 3 residues coordinate (3S)-3-hydroxy-3-methylglutaryl-CoA: Cys-166, Asn-204, and Thr-208. Catalysis depends on Cys-166, which acts as the Acyl-thioester intermediate. Lys-243 is subject to N6-acetyllysine. Lys-256 carries the N6-acetyllysine; alternate modification. At Lys-256 the chain carries N6-succinyllysine; alternate. The (3S)-3-hydroxy-3-methylglutaryl-CoA site is built by Ser-258 and His-301. His-301 functions as the Proton donor/acceptor in the catalytic mechanism. Lys-306 carries the N6-acetyllysine modification. A (3S)-3-hydroxy-3-methylglutaryl-CoA-binding site is contributed by Lys-310. Lys-310 is modified (N6-acetyllysine; alternate). The residue at position 310 (Lys-310) is an N6-succinyllysine; alternate. Position 333 is an N6-succinyllysine (Lys-333). An N6-acetyllysine; alternate mark is found at Lys-342, Lys-350, Lys-354, and Lys-358. Lys-342, Lys-350, Lys-354, and Lys-358 each carry N6-succinyllysine; alternate. 2 residues coordinate (3S)-3-hydroxy-3-methylglutaryl-CoA: Asn-380 and Ser-414. The residue at position 433 (Ser-433) is a Phosphoserine. Residue Lys-437 is modified to N6-acetyllysine. Ser-440 carries the post-translational modification Phosphoserine. An N6-acetyllysine; alternate modification is found at Lys-447. Residue Lys-447 is modified to N6-succinyllysine; alternate. Ser-456 is subject to Phosphoserine. Lys-473 is subject to N6-acetyllysine; alternate. At Lys-473 the chain carries N6-succinyllysine; alternate. The residue at position 477 (Ser-477) is a Phosphoserine.

Belongs to the thiolase-like superfamily. HMG-CoA synthase family. As to quaternary structure, homodimer. In terms of processing, succinylated. Desuccinylated by SIRT5. Succinylation, at least at Lys-310, inhibits the enzymatic activity.

It localises to the mitochondrion. The enzyme catalyses acetoacetyl-CoA + acetyl-CoA + H2O = (3S)-3-hydroxy-3-methylglutaryl-CoA + CoA + H(+). Its pathway is metabolic intermediate biosynthesis; (R)-mevalonate biosynthesis; (R)-mevalonate from acetyl-CoA: step 2/3. Catalyzes the first irreversible step in ketogenesis, condensing acetyl-CoA to acetoacetyl-CoA to form HMG-CoA, which is converted by HMG-CoA reductase (HMGCR) into mevalonate. This chain is Hydroxymethylglutaryl-CoA synthase, mitochondrial (HMGCS2), found in Bos taurus (Bovine).